We begin with the raw amino-acid sequence, 55 residues long: Lantibiotic epilancin (55 aa).

A propeptide spans 1 to 24 (cleaved by ElxP); it reads MNNSLFDLNLNKGVETQKSDLSPQ. Residue Ser25 is modified to D-lactate; by the dehydratase ElxB and the dehydrogenase ElxO. Position 27 is a 2,3-didehydroalanine (Ser); by the dehydratase ElxB (Ser27). Residue Thr31 is modified to 2,3-didehydrobutyrine; by the dehydratase ElxB. Ser32 carries the 2,3-didehydroalanine (Ser); by the dehydratase ElxB modification. The lanthionine (Ser-Cys); by the dehydratase ElxB and the cyclase ElxC cross-link spans 36 to 40; the sequence is SKKYC. 2 cross-links (beta-methyllanthionine (Thr-Cys); by the dehydratase ElxB and the cyclase ElxC) span residues 44–47 and 46–49; these read TLTC and TCGC. A 2,3-didehydrobutyrine; by the dehydratase ElxB modification is found at Thr52.

It belongs to the type A lantibiotic family. Maturation of this lantibiotic involves the enzymatic conversion of Thr, and Ser into dehydrated AA by ElxB and the formation of thioether bonds with cysteine by the cyclase ElxC. The next steps are cleavage of the leader peptide by ElxP and membrane translocation by ElxT. The leader peptide may be removed before membrane translocation, in contrast to other lantibiotics for which the cleavage occur after translocation. This is suggested by the probable cytoplasmic localization of the serine protease ElxP that cleaves the leader peptide. In terms of processing, it is not established whether the 2,3-didehydrobutyrine is the E- or Z-isomer. Post-translationally, the N-terminal D-lactate is probably produced by dehydration of Ser-25 by ElxB, followed by proteolytic removal of the leader peptide by the serine protease ElxP and hydrolysis of the resulting new N-terminal dehydroalanine. This hydrolysis may occur spontaneously. The pyruvate group thus formed is reduced to D-lactate by the NADPH-dependent oxidoreductase ElxO. This N-terminal D-lactate protects the lantibiotic against degradation against aminopeptidase.

Lanthionine-containing peptide antibiotic (lantibiotic) active on Gram-positive bacteria such as staphylococci, enterococci and streptococci. The bactericidal activity of lantibiotics is based on depolarization of energized bacterial cytoplasmic membranes, initiated by the formation of aqueous transmembrane pores. The protein is Lantibiotic epilancin (elkA) of Staphylococcus epidermidis.